A 64-amino-acid chain; its full sequence is Ferredoxin-2 (64 aa).

A 4Fe-4S ferredoxin-type domain is found at 2–29 (RIHVDQDKCCGAGSCVLAAPDVFDQREE). [3Fe-4S] cluster contacts are provided by Cys10, Cys16, and Cys55.

Requires [3Fe-4S] cluster as cofactor.

In terms of biological role, electron transport protein for the cytochrome P-450-SU2 system. This Streptomyces griseolus protein is Ferredoxin-2 (subB).